We begin with the raw amino-acid sequence, 174 residues long: Urease accessory protein UreE (174 aa).

Belongs to the UreE family.

The protein localises to the cytoplasm. Functionally, involved in urease metallocenter assembly. Binds nickel. Probably functions as a nickel donor during metallocenter assembly. The chain is Urease accessory protein UreE from Helicobacter hepaticus (strain ATCC 51449 / 3B1).